A 380-amino-acid polypeptide reads, in one-letter code: Cytochrome b (380 aa).

A run of 4 helical transmembrane segments spans residues 34-54 (FGSLLGICLLTQILTGLLLAM), 78-99 (WLIRNLHANGASFFFICIYLHI), 114-134 (WNTGVILLLTLMATAFVGYVL), and 179-199 (FFALHFLLPFMITGLTTIHLT). Heme b-binding residues include His84 and His98. Positions 183 and 197 each coordinate heme b. His202 provides a ligand contact to a ubiquinone. Transmembrane regions (helical) follow at residues 227 to 247 (LKDFLGFTLMLLPLTTLALFS), 289 to 309 (LGGVLALAASVLILFLAPFLH), 321 to 341 (ISQLLFWILVTNLLILTWVGS), and 348 to 368 (FIIIGQLASITYFTILLILFP).

Belongs to the cytochrome b family. The cytochrome bc1 complex contains 11 subunits: 3 respiratory subunits (MT-CYB, CYC1 and UQCRFS1), 2 core proteins (UQCRC1 and UQCRC2) and 6 low-molecular weight proteins (UQCRH/QCR6, UQCRB/QCR7, UQCRQ/QCR8, UQCR10/QCR9, UQCR11/QCR10 and a cleavage product of UQCRFS1). This cytochrome bc1 complex then forms a dimer. Heme b serves as cofactor.

The protein resides in the mitochondrion inner membrane. In terms of biological role, component of the ubiquinol-cytochrome c reductase complex (complex III or cytochrome b-c1 complex) that is part of the mitochondrial respiratory chain. The b-c1 complex mediates electron transfer from ubiquinol to cytochrome c. Contributes to the generation of a proton gradient across the mitochondrial membrane that is then used for ATP synthesis. The sequence is that of Cytochrome b (MT-CYB) from Pelecanoides urinatrix (Common diving petrel).